Consider the following 325-residue polypeptide: Glycerol-3-phosphate dehydrogenase [NAD(P)+] (325 aa).

NADPH is bound by residues serine 14, phenylalanine 15, arginine 35, and lysine 109. 2 residues coordinate sn-glycerol 3-phosphate: lysine 109 and glycine 137. Alanine 141 contributes to the NADPH binding site. 5 residues coordinate sn-glycerol 3-phosphate: lysine 192, aspartate 247, serine 257, arginine 258, and asparagine 259. Lysine 192 functions as the Proton acceptor in the catalytic mechanism. Arginine 258 is an NADPH binding site. The NADPH site is built by leucine 282 and glutamate 284.

It belongs to the NAD-dependent glycerol-3-phosphate dehydrogenase family.

Its subcellular location is the cytoplasm. The enzyme catalyses sn-glycerol 3-phosphate + NAD(+) = dihydroxyacetone phosphate + NADH + H(+). The catalysed reaction is sn-glycerol 3-phosphate + NADP(+) = dihydroxyacetone phosphate + NADPH + H(+). The protein operates within membrane lipid metabolism; glycerophospholipid metabolism. In terms of biological role, catalyzes the reduction of the glycolytic intermediate dihydroxyacetone phosphate (DHAP) to sn-glycerol 3-phosphate (G3P), the key precursor for phospholipid synthesis. The protein is Glycerol-3-phosphate dehydrogenase [NAD(P)+] of Rickettsia africae (strain ESF-5).